Reading from the N-terminus, the 145-residue chain is Maximins 5/H4 type 1 (145 aa).

The first 18 residues, 1-18 (MNFKYIVAVSFLIASAYA), serve as a signal peptide directing secretion. 2 propeptides span residues 19–43 (RSVQNDEQSLSQRDVLEEESLREIR) and 74–124 (TAEE…KEKR). The residue at position 144 (Leu-144) is a Leucine amide.

Belongs to the bombinin family. Expressed by the skin glands.

It localises to the secreted. Functionally, maximin-5 shows antibacterial activity against both Gram-positive and Gram-negative bacteria. The only exception is the resistance of E.coli. Also shows antimicrobial activity against fungi C.albicans, A.flavus and P.uticale. It has little hemolytic activity. It does not possess a significant cytotoxicity against tumor cell lines. It does not possess a significant anti-HIV activity. Maximin-H4 shows antibacterial activity against both Gram-positive and Gram-negative bacteria. It also shows antimicrobial activity against the fungus C.albicans. Shows strong hemolytic activity. The polypeptide is Maximins 5/H4 type 1 (Bombina maxima (Giant fire-bellied toad)).